The following is an 89-amino-acid chain: DNA-directed RNA polymerase subunit omega (89 aa).

It belongs to the RNA polymerase subunit omega family. In terms of assembly, the RNAP catalytic core consists of 2 alpha, 1 beta, 1 beta' and 1 omega subunit. When a sigma factor is associated with the core the holoenzyme is formed, which can initiate transcription.

It catalyses the reaction RNA(n) + a ribonucleoside 5'-triphosphate = RNA(n+1) + diphosphate. In terms of biological role, promotes RNA polymerase assembly. Latches the N- and C-terminal regions of the beta' subunit thereby facilitating its interaction with the beta and alpha subunits. This is DNA-directed RNA polymerase subunit omega from Idiomarina loihiensis (strain ATCC BAA-735 / DSM 15497 / L2-TR).